We begin with the raw amino-acid sequence, 214 residues long: Outer membrane lipoprotein MapA (214 aa).

Residues 1–17 (MFKKFLIFIVPILFLSA) form the signal peptide. Cys18 carries N-palmitoyl cysteine lipidation. Residue Cys18 is the site of S-diacylglycerol cysteine attachment.

It localises to the cell outer membrane. In Campylobacter jejuni subsp. jejuni serotype O:6 (strain 81116 / NCTC 11828), this protein is Outer membrane lipoprotein MapA (mapA).